The following is a 592-amino-acid chain: Putative uric acid sigma-54-dependent transcriptional regulator UacR (592 aa).

Residues 158–229 enclose the PAS domain; that stretch reads ISKIFATMID…HMQHIVSWDD (72 aa). One can recognise a Sigma-54 factor interaction domain in the interval 272–502; sequence LVGECRVMRQ…LSNLMEYLVN (231 aa). ATP-binding positions include 300-307 and 364-373; these read GESGTGKE and ANTGTLFLDE. Positions 567–585 form a DNA-binding region, H-T-H motif; the sequence is KQVADELGIGIATLYRKIK.

Essential for both formate-dependent and formate-independent uric acid degradation. May be directly involved in the transcription of uacF in response to hypoxanthine, xanthine, and uric acid. This is Putative uric acid sigma-54-dependent transcriptional regulator UacR from Escherichia coli (strain K12).